The chain runs to 52 residues: Gastrin/cholecystokinin-like peptide (52 aa).

Belongs to the gastrin/cholecystokinin family.

The protein localises to the secreted. Its function is as follows. May control digestion processes. This chain is Gastrin/cholecystokinin-like peptide, found in Trachemys scripta (Red-eared slider turtle).